A 111-amino-acid polypeptide reads, in one-letter code: Ribonuclease P protein component (111 aa).

It belongs to the RnpA family. Consists of a catalytic RNA component (M1 or rnpB) and a protein subunit.

It catalyses the reaction Endonucleolytic cleavage of RNA, removing 5'-extranucleotides from tRNA precursor.. RNaseP catalyzes the removal of the 5'-leader sequence from pre-tRNA to produce the mature 5'-terminus. It can also cleave other RNA substrates such as 4.5S RNA. The protein component plays an auxiliary but essential role in vivo by binding to the 5'-leader sequence and broadening the substrate specificity of the ribozyme. The sequence is that of Ribonuclease P protein component from Clostridium botulinum (strain Okra / Type B1).